We begin with the raw amino-acid sequence, 423 residues long: Zinc finger and BTB domain-containing protein 6 (423 aa).

One can recognise a BTB domain in the interval 33–97 (CDVSIYINDT…CYTGALEVKR (65 aa)). Ser-201 is subject to Phosphoserine. C2H2-type zinc fingers lie at residues 300 to 322 (HQCP…LKMH), 325 to 347 (FLCL…IRGH), 353 to 375 (FQCT…LNIH), and 381 to 404 (YKCH…TSVH).

The protein localises to the nucleus. May be involved in transcriptional regulation. This Mus musculus (Mouse) protein is Zinc finger and BTB domain-containing protein 6 (Zbtb6).